The primary structure comprises 408 residues: Argininosuccinate synthase (408 aa).

ATP is bound by residues 10–18 and alanine 37; that span reads AYSGGLDTS. L-citrulline contacts are provided by tyrosine 90 and serine 95. An ATP-binding site is contributed by glycine 120. L-aspartate is bound by residues threonine 122, asparagine 126, and aspartate 127. Position 126 (asparagine 126) interacts with L-citrulline. The L-citrulline site is built by arginine 130, serine 181, serine 190, glutamate 266, and tyrosine 278.

This sequence belongs to the argininosuccinate synthase family. Type 1 subfamily. Homotetramer.

It is found in the cytoplasm. The enzyme catalyses L-citrulline + L-aspartate + ATP = 2-(N(omega)-L-arginino)succinate + AMP + diphosphate + H(+). Its pathway is amino-acid biosynthesis; L-arginine biosynthesis; L-arginine from L-ornithine and carbamoyl phosphate: step 2/3. This Chromobacterium violaceum (strain ATCC 12472 / DSM 30191 / JCM 1249 / CCUG 213 / NBRC 12614 / NCIMB 9131 / NCTC 9757 / MK) protein is Argininosuccinate synthase.